The chain runs to 296 residues: Ribosomal RNA small subunit methyltransferase A (296 aa).

Residues N32, L34, G59, E80, D105, and N130 each coordinate S-adenosyl-L-methionine.

Belongs to the class I-like SAM-binding methyltransferase superfamily. rRNA adenine N(6)-methyltransferase family. RsmA subfamily.

It is found in the cytoplasm. It catalyses the reaction adenosine(1518)/adenosine(1519) in 16S rRNA + 4 S-adenosyl-L-methionine = N(6)-dimethyladenosine(1518)/N(6)-dimethyladenosine(1519) in 16S rRNA + 4 S-adenosyl-L-homocysteine + 4 H(+). Functionally, specifically dimethylates two adjacent adenosines (A1518 and A1519) in the loop of a conserved hairpin near the 3'-end of 16S rRNA in the 30S particle. May play a critical role in biogenesis of 30S subunits. The polypeptide is Ribosomal RNA small subunit methyltransferase A (Lactiplantibacillus plantarum (strain ATCC BAA-793 / NCIMB 8826 / WCFS1) (Lactobacillus plantarum)).